The following is a 215-amino-acid chain: Ribonuclease T (215 aa).

One can recognise an Exonuclease domain in the interval 20–194 (VVIDVETAGF…YDTMQTAKLF (175 aa)). Mg(2+)-binding residues include aspartate 23, glutamate 25, histidine 181, and aspartate 186. The active-site Proton donor/acceptor is histidine 181.

It belongs to the RNase T family. As to quaternary structure, homodimer. Mg(2+) is required as a cofactor.

Trims short 3' overhangs of a variety of RNA species, leaving a one or two nucleotide 3' overhang. Responsible for the end-turnover of tRNA: specifically removes the terminal AMP residue from uncharged tRNA (tRNA-C-C-A). Also appears to be involved in tRNA biosynthesis. This chain is Ribonuclease T, found in Yersinia enterocolitica serotype O:8 / biotype 1B (strain NCTC 13174 / 8081).